We begin with the raw amino-acid sequence, 86 residues long: Small ribosomal subunit protein bS20 (86 aa).

The segment covering 1–22 has biased composition (basic residues); sequence MANIKSAKKRAVQSEKRRKHNA. A disordered region spans residues 1–28; that stretch reads MANIKSAKKRAVQSEKRRKHNASGRSMM.

The protein belongs to the bacterial ribosomal protein bS20 family.

Its function is as follows. Binds directly to 16S ribosomal RNA. This chain is Small ribosomal subunit protein bS20, found in Serratia proteamaculans (strain 568).